We begin with the raw amino-acid sequence, 73 residues long: UPF0346 protein BLi02292/BL01432 (73 aa).

The protein belongs to the UPF0346 family.

This Bacillus licheniformis (strain ATCC 14580 / DSM 13 / JCM 2505 / CCUG 7422 / NBRC 12200 / NCIMB 9375 / NCTC 10341 / NRRL NRS-1264 / Gibson 46) protein is UPF0346 protein BLi02292/BL01432.